The primary structure comprises 168 residues: Photosystem I assembly protein Ycf3 (168 aa).

TPR repeat units follow at residues 35–68 (AFTY…EIDP), 72–105 (SYIL…NPFL), and 120–153 (GEQA…TPGN).

Belongs to the Ycf3 family.

The protein resides in the plastid. The protein localises to the chloroplast thylakoid membrane. In terms of biological role, essential for the assembly of the photosystem I (PSI) complex. May act as a chaperone-like factor to guide the assembly of the PSI subunits. The protein is Photosystem I assembly protein Ycf3 of Helianthus annuus (Common sunflower).